Here is a 134-residue protein sequence, read N- to C-terminus: ATP synthase epsilon chain (134 aa).

Belongs to the ATPase epsilon chain family. F-type ATPases have 2 components, CF(1) - the catalytic core - and CF(0) - the membrane proton channel. CF(1) has five subunits: alpha(3), beta(3), gamma(1), delta(1), epsilon(1). CF(0) has three main subunits: a, b and c.

The protein localises to the cell inner membrane. Functionally, produces ATP from ADP in the presence of a proton gradient across the membrane. The chain is ATP synthase epsilon chain from Sinorhizobium fredii (strain NBRC 101917 / NGR234).